The primary structure comprises 539 residues: Tripartite motif-containing protein 26 (539 aa).

The RING-type zinc finger occupies Cys16–Lys57. The B box-type zinc finger occupies Gln97–Met138. Zn(2+)-binding residues include Cys102, His105, Cys124, and His130. The stretch at Ile188 to Arg227 forms a coiled coil. Residues Arg295–Pro539 form the B30.2/SPRY domain. The segment at Arg376–Cys437 is disordered. Over residues Ser380 to Leu434 the composition is skewed to acidic residues.

The protein belongs to the TRIM/RBCC family. Interacts with TBK1; this interaction bridges together TBK1 and NEMO in order to activate TBK1. Interacts with INCA1. Autoubiquitinates upon viral infection. In turn, autoubiquitinated TRIM26 recruits NEMO and bridges TBK1-NEMO interaction.

It localises to the cytoplasm. Its subcellular location is the nucleus. The catalysed reaction is S-ubiquitinyl-[E2 ubiquitin-conjugating enzyme]-L-cysteine + [acceptor protein]-L-lysine = [E2 ubiquitin-conjugating enzyme]-L-cysteine + N(6)-ubiquitinyl-[acceptor protein]-L-lysine.. E3 ubiquitin-protein ligase which regulates the IFN-beta production and antiviral response downstream of various DNA-encoded pattern-recognition receptors (PRRs). Also plays a central role in determining the response to different forms of oxidative stress by controlling levels of DNA glycosylases NEIL1, NEIL3 and NTH1 that are involved in repair of damaged DNA. Promotes nuclear IRF3 ubiquitination and proteasomal degradation. Bridges together TBK1 and NEMO during the innate response to viral infection leading to the activation of TBK1. Positively regulates LPS-mediated inflammatory innate immune response by catalyzing the 'Lys-11'-linked polyubiquitination of TAB1 to enhance its activation and subsequent NF-kappa-B and MAPK signaling. In a manner independent of its catalytic activity, inhibits WWP2, a SOX2-directed E3 ubiquitin ligase, and thus protects SOX2 from polyubiquitination and proteasomal degradation. Ubiquitinates the histone acetyltransferase protein complex component PHF20 and thereby triggers its degradation in the nucleus after its recruitment by the histone demethylase KDM6B, serving as a scaffold protein. Upon induction by TGF-beta, ubiquitinates the TFIID component TAF7 for proteasomal degradation. Induces ferroptosis by ubiquitinating SLC7A11, a critical protein for lipid reactive oxygen species (ROS) scavenging. Inhibits directly hepatitis B virus replication by mediating HBX ubiquitination and subsequent degradation. Functionally, (Microbial infection) Promotes herpes simplex virus type 2/HHV-2 infection in vaginal epithelial cells by decreasing the nuclear localization of IRF3, the primary mediator of type I interferon activation. This chain is Tripartite motif-containing protein 26 (TRIM26), found in Homo sapiens (Human).